A 157-amino-acid polypeptide reads, in one-letter code: Ubiquitin-like protein 4A (157 aa).

The region spanning Met-1–Lys-76 is the Ubiquitin-like domain. A Glycyl lysine isopeptide (Lys-Gly) (interchain with G-Cter in ubiquitin) cross-link involves residue Lys-48. Ser-90 is subject to Phosphoserine. A required and sufficient for interaction with BAG6 region spans residues Trp-96 to Leu-138.

Component of the BAG6/BAT3 complex, at least composed of BAG6, UBL4A and GET4/TRC35. Interacts with BAG6; the interaction is direct and required for UBL4A protein stability. Interacts with USP13; may be indirect via BAG6. Polyubiquitinated. Ubiquitination by AMFR and deubiquitination by USP13 may regulate the interaction between the BAG6/BAT3 complex and SGTA and therefore may regulate client proteins fate.

Its subcellular location is the cytoplasm. The protein resides in the cytosol. It localises to the nucleus. As part of a cytosolic protein quality control complex, the BAG6/BAT3 complex, maintains misfolded and hydrophobic patches-containing proteins in a soluble state and participates in their proper delivery to the endoplasmic reticulum or alternatively can promote their sorting to the proteasome where they undergo degradation. The BAG6/BAT3 complex is involved in the post-translational delivery of tail-anchored/type II transmembrane proteins to the endoplasmic reticulum membrane. Recruited to ribosomes, it interacts with the transmembrane region of newly synthesized tail-anchored proteins and together with SGTA and ASNA1 mediates their delivery to the endoplasmic reticulum. Client proteins that cannot be properly delivered to the endoplasmic reticulum are ubiquitinated and sorted to the proteasome. Similarly, the BAG6/BAT3 complex also functions as a sorting platform for proteins of the secretory pathway that are mislocalized to the cytosol either delivering them to the proteasome for degradation or to the endoplasmic reticulum. The BAG6/BAT3 complex also plays a role in the endoplasmic reticulum-associated degradation (ERAD), a quality control mechanism that eliminates unwanted proteins of the endoplasmic reticulum through their retrotranslocation to the cytosol and their targeting to the proteasome. It maintains these retrotranslocated proteins in an unfolded yet soluble state condition in the cytosol to ensure their proper delivery to the proteasome. This is Ubiquitin-like protein 4A from Homo sapiens (Human).